Here is a 331-residue protein sequence, read N- to C-terminus: Transmembrane protein 59-like (331 aa).

The signal sequence occupies residues Met-1 to Ala-21. The segment at Pro-15 to Asn-62 is disordered. Positions Gly-45–Glu-54 are enriched in pro residues. A glycan (N-linked (GlcNAc...) asparagine) is linked at Asn-90. The helical transmembrane segment at Val-258–Leu-278 threads the bilayer. Positions Thr-329 to Leu-331 match the Microbody targeting signal motif.

Belongs to the TMEM59 family.

The protein localises to the golgi apparatus membrane. Functionally, modulates the O-glycosylation and complex N-glycosylation steps occurring during the Golgi maturation of APP. Inhibits APP transport to the cell surface and further shedding. This is Transmembrane protein 59-like (Tmem59l) from Rattus norvegicus (Rat).